The following is a 322-amino-acid chain: Atrochrysone carboxyl ACP thioesterase nsrC (322 aa).

The Zn(2+) site is built by H105, H107, D109, and H110. Residue D109 is the Proton donor/acceptor of the active site.

This sequence belongs to the metallo-beta-lactamase superfamily. Zn(2+) serves as cofactor.

The catalysed reaction is atrochrysone carboxyl-[ACP] + H2O = atrochrysone carboxylate + holo-[ACP] + H(+). It participates in secondary metabolite biosynthesis. Atrochrysone carboxyl ACP thioesterase; part of the gene cluster that mediates the biosynthesis of the tetrahydroxanthone dimer neosartorin, which exhibits antibacterial activity. The two different monomeric units appear to be synthesized by the same set of enzymes, among which the Baeyer-Villiger monooxygenase nsrF is the key enzyme for the divergence of the biosynthetic routes. The pathway begins with the synthesis of atrochrysone thioester by the polyketide synthase nsrB. The atrochrysone carboxyl ACP thioesterase nsrC then breaks the thioester bond and releases the atrochrysone carboxylic acid from AacuL. Atrochrysone carboxylic acid is decarboxylated by the decarboxylase nsrE, and oxidized by the anthrone oxygenase nsrD to yield emodin. Emodin is then reduced to emodin hydroquinone by the oxidoreductase nsrR. A-ring reduction by the short chain dehydrogenase nsrJ, dehydration by the scytalone dehydratase-like protein nsrI and probable spontaneous re-oxidation, results in overall deoxygenation to chrysophanol. The Baeyer-Villiger monooxygenase nsrF accepts chrysophanol as a substrate to insert one oxygen atom at two different positions to yield the precursors of both monomric units. NsrF is promiscuous/flexible in interacting with the 2 (non methylated and methylated) aromatic rings of chrysophanol, thus diverging the biosynthetic pathway at this point. After the hydrolysis of the lactones, methylesterification by the methyltransferase nsrG yields respectively moniliphenone and 2,2',6'-trihydroxy-4-methyl-6-methoxya-cyldiphenylmethanone. The next steps are the hydroxylation by the FAD-dependent monooxygenase nsrK, followed by isomerization by the monooxygenase nsrQ. The short chain dehydrogenase/reductase nsrO then catalyzes the C-5 ketoreduction to give the xanthone skeleton of blennolide C and 5-acetylblennolide A. The acetyltransferase nsrL has a strict substrate specificity and uses only blennolide A but not blennolide C to yield 5-acetylblennolide A as the single-acetylated product. In the final step of the biosynthesis, the heterodimerization of the 2 xanthones, blennolide C and 5-acetylblennolide A, is catalyzed by the cytochrome P450 monooxygenase nsrP. NsrP can utilize at least three different xanthones as its substrates to perform the dimerization reaction. This Aspergillus novofumigatus (strain IBT 16806) protein is Atrochrysone carboxyl ACP thioesterase nsrC.